The chain runs to 317 residues: Ribosomal protein L11 methyltransferase (317 aa).

Residues Thr162, Gly183, Asp205, and Asn248 each contribute to the S-adenosyl-L-methionine site.

It belongs to the methyltransferase superfamily. PrmA family.

The protein resides in the cytoplasm. The enzyme catalyses L-lysyl-[protein] + 3 S-adenosyl-L-methionine = N(6),N(6),N(6)-trimethyl-L-lysyl-[protein] + 3 S-adenosyl-L-homocysteine + 3 H(+). Its function is as follows. Methylates ribosomal protein L11. The protein is Ribosomal protein L11 methyltransferase of Alkaliphilus metalliredigens (strain QYMF).